A 68-amino-acid polypeptide reads, in one-letter code: uncharacterized protein (68 aa).

Residues 1–68 are disordered; sequence METIIRRFSP…GNSKNIKTKK (68 aa). A compositionally biased stretch (basic and acidic residues) spans 9–34; the sequence is SPKEKEKEKEKEEKDEKSKDKKEPIK. A compositionally biased stretch (acidic residues) spans 42–51; the sequence is DEEEEEDEQE.

This is an uncharacterized protein from Dictyostelium discoideum (Social amoeba).